A 520-amino-acid polypeptide reads, in one-letter code: AMP-binding domain-containing enzyme iboA (520 aa).

180–191 (LTSGSTSGSPKV) lines the ATP pocket. Positions 397–447 (DGNFHTGDLFEKQLDGSYLFRGRGDDWIKSEDSRFIDTKAIEEKINDVCSD) match the FACS motif.

The protein belongs to the ATP-dependent AMP-binding enzyme family. It depends on Mg(2+) as a cofactor.

The protein operates within secondary metabolite biosynthesis. AMP-binding domain-containing enzyme; part of the gene cluster that mediates the biosynthesis of the psychoactive metabolites ibotenic acid and muscimol. The first committed step is glutamate hydroxylation by the 2-oxoglutarate-dependent dioxygenase iboH, and the last step is decarboxylation of ibotenic acid to muscimol by the decarboxylase iboD. The order of the intermediate reactions is somewhat ambiguous. IboA likely activates the carboxylic acid at position 5 to introduce an amide bond, and the flavin monooxygenase iboF generates the N-O bond. There are several options for the latter step. One option is that iboF directly hydroxylates the amide nitrogen formed by iboA to produce a hydroxamic acid species. Another option is that iboF hydroxylates an external N-containing compound, whose resulting N-O bond is subsequently introduced into the hydroxyglutamate scaffold. The paralogous PLP-dependent cystathionine gamma-synthase-like enzymes iboG1 and iboG2 are likely involved in substitution of the OH group at position 3 by the O-N moiety. The first cyclic intermediate is most probably tricholomic acid which is likely desaturated to ibotenic acid by the cytochrome P450 monooxygenase iboC. This Amanita muscaria (strain Koide BX008) protein is AMP-binding domain-containing enzyme iboA.